Consider the following 208-residue polypeptide: V-type ATP synthase subunit D (208 aa).

It belongs to the V-ATPase D subunit family.

In terms of biological role, produces ATP from ADP in the presence of a proton gradient across the membrane. The chain is V-type ATP synthase subunit D from Chlamydia abortus (strain DSM 27085 / S26/3) (Chlamydophila abortus).